A 162-amino-acid chain; its full sequence is Anaerobic nitrite reductase NSHB2 (162 aa).

The Globin domain maps to 16 to 159 (SFSEEQEALV…LVAAIKQEMK (144 aa)). The Homodimerization signature appears at 49 to 53 (EVAPS). Heme b is bound by residues S59, K73, H77, R100, T104, and H105. The Homodimerization signature appears at 112-124 (DAHFEVTRFALLE).

The protein belongs to the plant globin family. Homodimer. Heme b is required as a cofactor. Mainly expressed in germinating seeds, seedlings, roots, flowers and leaves.

Its subcellular location is the cytoplasm. It is found in the nucleus. It catalyses the reaction Fe(III)-heme b-[protein] + nitric oxide + H2O = Fe(II)-heme b-[protein] + nitrite + 2 H(+). In terms of biological role, phytoglobin that reduces nitrite to nitric oxide under anoxic conditions (e.g. during flooding or in waterlogged soil). May not function as an oxygen storage or transport protein. Has an unusually high affinity for O(2) through an hexacoordinate heme iron because of a very low dissociation constant. Promotes tolerance to low potassium K(+) conditions. In Oryza sativa subsp. indica (Rice), this protein is Anaerobic nitrite reductase NSHB2.